The primary structure comprises 1915 residues: Protein NLRC5 (1915 aa).

The tract at residues 103–137 is disordered; sequence LGAGEESCPGPQLYHGAKRPFQSYGSSPRRKNSKK. The NACHT domain maps to 223-542; that stretch reads RVTVLLGKAG…HTVDKDTLVE (320 aa). 229 to 236 is an ATP binding site; the sequence is GKAGMGKT. LRR repeat units lie at residues 622 to 646, 716 to 740, 744 to 771, 772 to 796, 871 to 898, 900 to 923, 930 to 953, 1006 to 1033, 1034 to 1055, 1138 to 1161, 1162 to 1184, 1240 to 1263, 1265 to 1292, 1348 to 1371, 1481 to 1504, 1519 to 1542, 1552 to 1575, 1576 to 1598, 1603 to 1626, 1631 to 1654, 1659 to 1682, 1687 to 1711, 1715 to 1738, 1741 to 1768, 1769 to 1795, 1821 to 1845, and 1849 to 1872; these read VAETQDLELARFTAQSLPSRLSFHN, MGSLKTLGLTGSRITAQGISHLIQT, CSQLEEVSLHDNQLKDPEVLSLVELLPS, LPKLQKLDLSRNSFSRSILLSLVKV, SPQLEEVNLSGNHLEDDGCRLVAEAASQ, HIAQKLDLSDNGLSQTGVTYVLKA, LEDLHISLLNNTVVLTFAQEPREQ, THNLDHLDLSDNSLGGKGVILLTELLPG, LGPLKSLNLSRNGLSMDAVFSL, EVQLSCKSLSDDSLKILLQCLPQL, PQLSLLQLRHTVLSSRSPFLLAD, CNALSQLDLTDNLLGDIGLRCLLE, LPQLPISGWLDLSHNNISQEGILYLLET, AQQLTELWLTKCHLDLPQLTMLLN, SKLLQNILLSSCELKSFRLTFSQV, CHHLEELDFSNNSLREEDTELLMG, KLHLSFLPLGASSLALLIQGLSRM, TLLQDLCLSHNQIGDVGTQCLAA, LPELRKFDLSHNQIGDVGTQCLAA, LPELRKFNLSHNQIGHVGTQCLAA, LPELRKFDLSRNQIGDVGTQCLAA, LPELRKFDLSGNRIGPAGGVQLVKS, FEHLEEIKLGNNALGEPTALELAQ, PPQLRVLCLPSSHLGPEGALGLAQALEQ, CPHIEEVSLAENNLAGGVPRFSKRLPL, FPALEKLLLSGNLLGDEVAAELAQV, and MGQLKKVNLEWNRITARGAQLLAQ.

It belongs to the NLRP family. In terms of assembly, interacts with CHUK and IKBKB; prevents CHUK and IKBKB phosphorylation and inhibits their kinase activity. Interacts with RIGI and IFIH1; blocks the interaction of MAVS to RIGI. As to expression, expressed in spleen, thymus and lung.

The protein localises to the cytoplasm. Its function is as follows. Probable regulator of the NF-kappa-B and type I interferon signaling pathways. May also regulate the type II interferon signaling pathway. Plays a role in homeostatic control of innate immunity and in antiviral defense mechanisms. This is Protein NLRC5 (Nlrc5) from Mus musculus (Mouse).